Consider the following 292-residue polypeptide: Lipoyl synthase (292 aa).

Residues Cys-38, Cys-43, Cys-49, Cys-64, Cys-68, Cys-71, and Ser-277 each contribute to the [4Fe-4S] cluster site. In terms of domain architecture, Radical SAM core spans 50-266 (WSKGTATFML…KNRAESLGFR (217 aa)).

Belongs to the radical SAM superfamily. Lipoyl synthase family. [4Fe-4S] cluster serves as cofactor.

Its subcellular location is the cytoplasm. It catalyses the reaction [[Fe-S] cluster scaffold protein carrying a second [4Fe-4S](2+) cluster] + N(6)-octanoyl-L-lysyl-[protein] + 2 oxidized [2Fe-2S]-[ferredoxin] + 2 S-adenosyl-L-methionine + 4 H(+) = [[Fe-S] cluster scaffold protein] + N(6)-[(R)-dihydrolipoyl]-L-lysyl-[protein] + 4 Fe(3+) + 2 hydrogen sulfide + 2 5'-deoxyadenosine + 2 L-methionine + 2 reduced [2Fe-2S]-[ferredoxin]. It participates in protein modification; protein lipoylation via endogenous pathway; protein N(6)-(lipoyl)lysine from octanoyl-[acyl-carrier-protein]: step 2/2. Its function is as follows. Catalyzes the radical-mediated insertion of two sulfur atoms into the C-6 and C-8 positions of the octanoyl moiety bound to the lipoyl domains of lipoate-dependent enzymes, thereby converting the octanoylated domains into lipoylated derivatives. The chain is Lipoyl synthase from Chlorobium limicola (strain DSM 245 / NBRC 103803 / 6330).